The sequence spans 557 residues: T-complex protein 1 subunit theta-like 2 (557 aa).

Disordered regions lie at residues 1–33 and 531–557; these read MDST…EPHL and EIWN…GLNN.

It belongs to the TCP-1 chaperonin family.

Its subcellular location is the cytoplasm. Possible molecular chaperone; assists the folding of proteins upon ATP hydrolysis. The chain is T-complex protein 1 subunit theta-like 2 (CCT8L2) from Homo sapiens (Human).